We begin with the raw amino-acid sequence, 1330 residues long: Pre-mRNA-splicing factor CWC22 homolog (1330 aa).

Positions 1-377 are disordered; the sequence is MGESDAESDS…AAKITERQRK (377 aa). Positions 9 to 36 are enriched in low complexity; that stretch reads DSSSNSSSSDTSSGSDSDARSESSSSES. Basic and acidic residues predominate over residues 46-94; the sequence is QEESAKDAKKTDDTDRGEKRAKERDAGQDEQPTEQKKTPAAEPRSERQH. Residues 99-113 are compositionally biased toward low complexity; that stretch reads AGVEKQQEEAVAAAE. Positions 115–135 are enriched in basic and acidic residues; that stretch reads ESEKLNEAKKVETPVQRKEEA. Residues 138–148 are compositionally biased toward polar residues; sequence SSVTKELNSPK. Positions 149–166 are enriched in basic and acidic residues; it reads AQEENAARELEERRKDEE. Residues 168-177 are compositionally biased toward polar residues; it reads PVTTNGSSKE. Phosphothreonine is present on residues T191 and T201. Composition is skewed to basic and acidic residues over residues 191 to 201 and 208 to 236; these read TADHIEEGEIT and LPTKEEKKAVASKSPPKETQRKQSRSPDG. S219 and S221 each carry phosphoserine. Over residues 252–277 the composition is skewed to basic residues; that stretch reads SRRRRRSRSKGSRTRSRSKSPIRRRS. Composition is skewed to basic and acidic residues over residues 278–307 and 316–325; these read NSLERRRVERQRRHEERDKRDEERAKEREK and SSRRRDDSRE. The segment covering 355–366 has biased composition (low complexity); that stretch reads TETNADNETVTE. The region spanning 420-603 is the MIF4G domain; sequence KKSIHGYINK…EVLFQIRKDG (184 aa). The tract at residues 660–697 is disordered; sequence REILGSDDGSSSGSGSGSDSDSDSDGESGSDAEKKAEA. Over residues 665–678 the composition is skewed to low complexity; sequence SDDGSSSGSGSGSD. The span at 679–689 shows a compositional bias: acidic residues; sequence SDSDSDGESGS. The MI domain occupies 710–826; that stretch reads ALRRTIYLTI…SWDVLECIQL (117 aa). The tract at residues 926-1330 is disordered; the sequence is FRDGSAPAGN…RSSRRSKGRS (405 aa). Residues 941–951 show a composition bias toward low complexity; that stretch reads SSSSSSSSSSD. A compositionally biased stretch (acidic residues) spans 952-963; the sequence is TDSEDSSEEDSS. Over residues 964 to 976 the composition is skewed to low complexity; that stretch reads SDSSSESSSSDSS. Residues 980 to 1012 are compositionally biased toward basic residues; that stretch reads KKKRKRKDKDKKKSKKATKEKSKKTKNKKKKKK. The span at 1013–1033 shows a compositional bias: basic and acidic residues; the sequence is AEKEQEKEKEKQRKSKKEKEK. The segment covering 1034-1054 has biased composition (basic residues); it reads DKKRKKEEKKAAKKKSKHRRK. Positions 1072–1082 are enriched in low complexity; that stretch reads SESSDSSNSSS. Positions 1089 to 1110 are enriched in basic and acidic residues; sequence PQAKIKRQEHVEKNKFRGRTQD. At T1108 the chain carries Phosphothreonine. 4 positions are modified to phosphoserine: S1111, S1121, S1180, and S1181. Composition is skewed to basic and acidic residues over residues 1133–1195 and 1203–1320; these read RRRD…VAHD and SRSY…SRRE. Y1182 carries the post-translational modification Phosphotyrosine. The span at 1321–1330 shows a compositional bias: basic residues; that stretch reads RSSRRSKGRS.

The protein belongs to the CWC22 family. Component of the spliceosome C complex. Interacts with eIF4AIII.

The protein resides in the nucleus speckle. Required for pre-mRNA splicing and for exon-junction complex (EJC) assembly. Hinders eIF4AIII from non-specifically binding RNA and escorts it to the splicing machinery to promote EJC assembly on mature mRNAs. This is Pre-mRNA-splicing factor CWC22 homolog (ncm) from Drosophila melanogaster (Fruit fly).